The sequence spans 329 residues: Interleukin-12 subunit beta (329 aa).

A signal peptide spans 1–22; that stretch reads MCHQWLVLSWFSLVLLASPLMA. Residues 29-106 enclose the Ig-like C2-type domain; the sequence is DVYVVELDWY…LSHSHLLLHK (78 aa). The cysteines at positions 50 and 90 are disulfide-linked. N-linked (GlcNAc...) asparagine glycosylation is found at Asn125, Asn135, and Asn223. Residues 238–329 form the Fibronectin type-III domain; that stretch reads PPKNLQLKPL…WSEWASVSCS (92 aa).

The protein belongs to the IL-12B family. Heterodimer with IL12A; disulfide-linked. The heterodimer is known as interleukin IL-12. Heterodimer with IL23A; disulfide-linked. The heterodimer is known as interleukin IL-23. Also secreted as a monomer. Interacts with NBR1; this interaction promotes IL-12 secretion.

It localises to the secreted. Functionally, cytokine that can act as a growth factor for activated T and NK cells, enhance the lytic activity of NK/lymphokine-activated killer cells, and stimulate the production of IFN-gamma by resting PBMC. In terms of biological role, associates with IL23A to form the IL-23 interleukin, a heterodimeric cytokine which functions in innate and adaptive immunity. IL-23 may constitute with IL-17 an acute response to infection in peripheral tissues. IL-23 binds to a heterodimeric receptor complex composed of IL12RB1 and IL23R, activates the Jak-Stat signaling cascade, stimulates memory rather than naive T-cells and promotes production of pro-inflammatory cytokines. IL-23 induces autoimmune inflammation and thus may be responsible for autoimmune inflammatory diseases and may be important for tumorigenesis. The protein is Interleukin-12 subunit beta (IL12B) of Equus caballus (Horse).